The following is a 304-amino-acid chain: MKVVVNERRCFGSGQCVLVAPEVFEQSNDGTVTLLVDKPSPDNHSLVRAAARSCPATAIRFEENAMRQEPTEFSYDDLPALISRMRGDERHSFSSSSTMDVLWVLYDEIPNVSPESPDDDDRDRFLLSKGHGPMAYYAVLAAKGFLRPELLDTWATKNSPLGFAPDRTKISGVEMSGGSLGHGLPLAVGVAMGLRIQNRHAPRVFVLIGDGEFDEGSNHEAMAFAGRARLNQLTVIVLDNGTASMGWPHGIDKRFDGEGWDTININGADHEEIAAALNRDHNDRPLAVVATVTRQSARSSIQQR.

The 4Fe-4S ferredoxin-type domain occupies 2 to 29 (KVVVNERRCFGSGQCVLVAPEVFEQSND). [3Fe-4S] cluster-binding residues include C10, C16, and C54. The transketolase-like stretch occupies residues 66–304 (MRQEPTEFSY…QSARSSIQQR (239 aa)).

The protein in the C-terminal section; belongs to the transketolase family. [3Fe-4S] cluster is required as a cofactor.

Its function is as follows. Plays a role in electron transfer. The fas operon encodes genes involved in cytokinin production and in host plant fasciation (leafy gall). The protein is Ferredoxin fas2 (fas2) of Rhodococcoides fascians (Rhodococcus fascians).